Consider the following 231-residue polypeptide: Protein fmp52-2, mitochondrial (231 aa).

A mitochondrion-targeting transit peptide spans 1-46 (MTMTTAAVFGCTGAVGSQILATLLAIDTFPSVKTISRRLPNVQSPK).

Belongs to the FMP52 family.

The protein resides in the mitochondrion outer membrane. The polypeptide is Protein fmp52-2, mitochondrial (fmp522) (Neosartorya fischeri (strain ATCC 1020 / DSM 3700 / CBS 544.65 / FGSC A1164 / JCM 1740 / NRRL 181 / WB 181) (Aspergillus fischerianus)).